The chain runs to 375 residues: Growth/differentiation factor 8 (375 aa).

The first 18 residues, 1–18 (MQKLQIFVYIYLFMLTVA), serve as a signal peptide directing secretion. Positions 19-266 (GPVDLNENSE…VTDTPKRARR (248 aa)) are excised as a propeptide. Residues N48 and N71 are each glycosylated (N-linked (GlcNAc...) asparagine). 4 cysteine pairs are disulfide-bonded: C272-C282, C281-C340, C309-C372, and C313-C374.

Belongs to the TGF-beta family. As to quaternary structure, homodimer; disulfide-linked. Interacts with WFIKKN2, leading to inhibit its activity. Interacts with FSTL3. In terms of processing, synthesized as large precursor molecule that undergoes proteolytic cleavage to generate an N-terminal propeptide and a disulfide linked C-terminal dimer, which is the biologically active molecule. The circulating form consists of a latent complex of the C-terminal dimer and other proteins, including its propeptide, which maintain the C-terminal dimer in a latent, inactive state. Ligand activation requires additional cleavage of the prodomain by a tolloid-like metalloproteinase.

Its subcellular location is the secreted. In terms of biological role, acts specifically as a negative regulator of skeletal muscle growth. This is Growth/differentiation factor 8 (MSTN) from Sylvicapra grimmia (Grey duiker).